We begin with the raw amino-acid sequence, 205 residues long: Ribosomal RNA small subunit methyltransferase G (205 aa).

Residues glycine 66, phenylalanine 71, 119 to 120 (IE), and arginine 135 each bind S-adenosyl-L-methionine.

This sequence belongs to the methyltransferase superfamily. RNA methyltransferase RsmG family.

It localises to the cytoplasm. It catalyses the reaction guanosine(527) in 16S rRNA + S-adenosyl-L-methionine = N(7)-methylguanosine(527) in 16S rRNA + S-adenosyl-L-homocysteine. Specifically methylates the N7 position of guanine in position 527 of 16S rRNA. The protein is Ribosomal RNA small subunit methyltransferase G of Rhizobium leguminosarum bv. trifolii (strain WSM2304).